A 576-amino-acid chain; its full sequence is Quinone-reactive Ni/Fe-hydrogenase large chain (576 aa).

Ni(2+) contacts are provided by cysteine 62, cysteine 65, cysteine 547, and cysteine 550.

The protein belongs to the [NiFe]/[NiFeSe] hydrogenase large subunit family. In terms of assembly, heterodimer of a large and a small subunit. Ni(2+) serves as cofactor.

It localises to the cell membrane. The catalysed reaction is H2 + a menaquinone = a menaquinol. In terms of biological role, this enzyme recycles the H(2) produced by nitrogenase to increase the production of ATP and to protect nitrogenase against inhibition or damage by O(2) under carbon- or phosphate-limited conditions. The sequence is that of Quinone-reactive Ni/Fe-hydrogenase large chain (hydB) from Wolinella succinogenes (strain ATCC 29543 / DSM 1740 / CCUG 13145 / JCM 31913 / LMG 7466 / NCTC 11488 / FDC 602W) (Vibrio succinogenes).